Here is a 456-residue protein sequence, read N- to C-terminus: Tyrosine phenol-lyase (456 aa).

Position 257 is an N6-(pyridoxal phosphate)lysine (lysine 257).

The protein belongs to the beta-eliminating lyase family. In terms of assembly, homotetramer. It depends on pyridoxal 5'-phosphate as a cofactor.

It carries out the reaction L-tyrosine + H2O = phenol + pyruvate + NH4(+). This chain is Tyrosine phenol-lyase (tpl), found in Citrobacter intermedius (Escherichia intermedia).